Reading from the N-terminus, the 118-residue chain is Large ribosomal subunit protein uL18 (118 aa).

Belongs to the universal ribosomal protein uL18 family. Part of the 50S ribosomal subunit; part of the 5S rRNA/L5/L18/L25 subcomplex. Contacts the 5S and 23S rRNAs.

Its function is as follows. This is one of the proteins that bind and probably mediate the attachment of the 5S RNA into the large ribosomal subunit, where it forms part of the central protuberance. This Rickettsia felis (strain ATCC VR-1525 / URRWXCal2) (Rickettsia azadi) protein is Large ribosomal subunit protein uL18.